Here is a 226-residue protein sequence, read N- to C-terminus: UPF0758 protein Spy49_0870 (226 aa).

An MPN domain is found at 103–225 (SVLTSVQVAE…YYSFREKSTL (123 aa)). Residues histidine 174, histidine 176, and aspartate 187 each coordinate Zn(2+). The short motif at 174–187 (HNHPSGNIEPSSND) is the JAMM motif element.

Belongs to the UPF0758 family.

The chain is UPF0758 protein Spy49_0870 from Streptococcus pyogenes serotype M49 (strain NZ131).